The sequence spans 425 residues: Stabilizer of axonemal microtubules 4 (425 aa).

3 disordered regions span residues 93 to 126 (PLEV…PPTK), 203 to 225 (EGSG…SQAL), and 316 to 335 (KEPT…PCDP). The span at 207-222 (FTKQSHQSPIVFQPPS) shows a compositional bias: polar residues.

As to quaternary structure, microtubule inner protein component of sperm flagellar doublet microtubules. Interacts with PPP1CA.

The protein localises to the cell projection. The protein resides in the cilium. It localises to the cytoplasm. It is found in the cytoskeleton. Its subcellular location is the flagellum axoneme. The chain is Stabilizer of axonemal microtubules 4 from Homo sapiens (Human).